A 177-amino-acid polypeptide reads, in one-letter code: DNA repair protein RAD33 (177 aa).

S2 bears the N-acetylserine mark. K19 participates in a covalent cross-link: Glycyl lysine isopeptide (Lys-Gly) (interchain with G-Cter in ubiquitin).

The protein localises to the nucleus. Its function is as follows. Involved in nucleotide excision repair (NER) of damaged DNA. Required for the repair of RNA polymerase I-transcribed rDNA and RNA polymerase II-transcribed DNA regions. May have a role in stabilizing the DNA repair proteins RAD4 and RAD34. This is DNA repair protein RAD33 (RAD33) from Saccharomyces cerevisiae (strain ATCC 204508 / S288c) (Baker's yeast).